A 514-amino-acid chain; its full sequence is Cytochrome P450 87A3 (514 aa).

The next 2 helical transmembrane spans lie at 36–56 (ASSM…VALL) and 315–335 (LMFV…TIGV). A heme-binding site is contributed by Cys463.

The protein belongs to the cytochrome P450 family. Requires heme as cofactor. Expressed in roots and coleoptiles, but not in leaves.

The protein localises to the cytoplasmic vesicle membrane. This chain is Cytochrome P450 87A3 (CYP87A3), found in Oryza sativa subsp. japonica (Rice).